The following is a 554-amino-acid chain: Glutamine--tRNA ligase (554 aa).

The 'HIGH' region signature appears at 34–44 (PEPNGYLHIGH). ATP-binding positions include 35–37 (EPN) and 41–47 (HIGHAKS). L-glutamine is bound by residues D67 and Y212. ATP is bound by residues T231, 261-262 (RL), and 269-271 (MSK). The 'KMSKS' region signature appears at 268–272 (IMSKR).

Belongs to the class-I aminoacyl-tRNA synthetase family. Monomer.

Its subcellular location is the cytoplasm. It catalyses the reaction tRNA(Gln) + L-glutamine + ATP = L-glutaminyl-tRNA(Gln) + AMP + diphosphate. In Serratia proteamaculans (strain 568), this protein is Glutamine--tRNA ligase.